A 269-amino-acid polypeptide reads, in one-letter code: Formamidopyrimidine-DNA glycosylase (269 aa).

Catalysis depends on Pro2, which acts as the Schiff-base intermediate with DNA. Catalysis depends on Glu3, which acts as the Proton donor. The Proton donor; for beta-elimination activity role is filled by Lys57. The DNA site is built by His90, Arg109, and Lys150. The segment at 235–269 adopts an FPG-type zinc-finger fold; sequence QVYGKGGKPCPRCDNPLSEMKIGQRASVFCSECQK. The active-site Proton donor; for delta-elimination activity is the Arg259.

The protein belongs to the FPG family. As to quaternary structure, monomer. Zn(2+) serves as cofactor.

It catalyses the reaction Hydrolysis of DNA containing ring-opened 7-methylguanine residues, releasing 2,6-diamino-4-hydroxy-5-(N-methyl)formamidopyrimidine.. The catalysed reaction is 2'-deoxyribonucleotide-(2'-deoxyribose 5'-phosphate)-2'-deoxyribonucleotide-DNA = a 3'-end 2'-deoxyribonucleotide-(2,3-dehydro-2,3-deoxyribose 5'-phosphate)-DNA + a 5'-end 5'-phospho-2'-deoxyribonucleoside-DNA + H(+). In terms of biological role, involved in base excision repair of DNA damaged by oxidation or by mutagenic agents. Acts as a DNA glycosylase that recognizes and removes damaged bases. Has a preference for oxidized purines, such as 7,8-dihydro-8-oxoguanine (8-oxoG). Has AP (apurinic/apyrimidinic) lyase activity and introduces nicks in the DNA strand. Cleaves the DNA backbone by beta-delta elimination to generate a single-strand break at the site of the removed base with both 3'- and 5'-phosphates. The polypeptide is Formamidopyrimidine-DNA glycosylase (Photobacterium profundum (strain SS9)).